Consider the following 364-residue polypeptide: 3'(2'),5'-bisphosphate nucleotidase 1 (364 aa).

Asp54 functions as the Proton acceptor in the catalytic mechanism. Mg(2+) contacts are provided by Glu77, Asp141, Ile143, and Asp144. Thr146 functions as the Proton acceptor in the catalytic mechanism. Adenosine 3',5'-bisphosphate contacts are provided by Thr146, His243, Ser272, Lys275, Arg289, and Asp302. His243, Ser272, Lys275, Arg289, and Asp302 together coordinate AMP. Asp302 serves as a coordination point for Mg(2+).

Belongs to the inositol monophosphatase superfamily. Requires Mg(2+) as cofactor.

The enzyme catalyses 3'-phosphoadenylyl sulfate + H2O = adenosine 5'-phosphosulfate + phosphate. The catalysed reaction is adenosine 3',5'-bisphosphate + H2O = AMP + phosphate. It carries out the reaction adenosine 2',5'-bisphosphate + H2O = AMP + phosphate. Its function is as follows. Phosphatase that converts adenosine 3'-phosphate 5'-phosphosulfate (PAPS) to adenosine 5'-phosphosulfate (APS) and 3'(2')-phosphoadenosine 5'-phosphate (PAP) to AMP. Regulates the flux of sulfur in the sulfur-activation pathway by converting PAPS to APS. Involved in salt tolerance. In Candida albicans (strain WO-1) (Yeast), this protein is 3'(2'),5'-bisphosphate nucleotidase 1 (HAL21).